Here is a 334-residue protein sequence, read N- to C-terminus: MKEIFLQISNRQDLSQDQVQAVFDRILKNEVSESQIASFLMGLKIKGETSDEITGIVRALKSHATVLPETFTDAMCNCGTGGDQSYSFNISTTACFVLAAGGIRMAKAGNRSISSKSGSADVLEVLGINVAASPEILSKALDEVGLAFIFAQTMHPAMRFIGPARQALGIPTIMNLVGPLANPLDLETQLMGLYRVELQEIVANAIQQLGRKRAVIITGPDNMDEAALYGTNTYTLLEDGHISQHTFTYEDLGMEKVELSDITGGDAKENAEILLSVLRNEASPYLETTVLNVGLGFFANGKAGTIKEGVELARQLIADGSALEKLRKLQEVQV.

5-phospho-alpha-D-ribose 1-diphosphate is bound by residues Gly79, 82–83 (GD), Ser87, 89–92 (NIST), 107–115 (KAGNRSISS), and Ser119. Gly79 provides a ligand contact to anthranilate. Residue Ser91 coordinates Mg(2+). Position 110 (Asn110) interacts with anthranilate. Residue Arg165 coordinates anthranilate. The Mg(2+) site is built by Asp224 and Glu225.

The protein belongs to the anthranilate phosphoribosyltransferase family. As to quaternary structure, homodimer. Mg(2+) is required as a cofactor.

It catalyses the reaction N-(5-phospho-beta-D-ribosyl)anthranilate + diphosphate = 5-phospho-alpha-D-ribose 1-diphosphate + anthranilate. It functions in the pathway amino-acid biosynthesis; L-tryptophan biosynthesis; L-tryptophan from chorismate: step 2/5. Functionally, catalyzes the transfer of the phosphoribosyl group of 5-phosphorylribose-1-pyrophosphate (PRPP) to anthranilate to yield N-(5'-phosphoribosyl)-anthranilate (PRA). This chain is Anthranilate phosphoribosyltransferase, found in Streptococcus thermophilus (strain ATCC BAA-491 / LMD-9).